Here is a 402-residue protein sequence, read N- to C-terminus: Phosphomevalonate dehydratase large subunit (402 aa).

Gly-48, Ala-49, Ser-50, Asn-79, and Pro-80 together coordinate (R)-5-phosphomevalonate. Cys-122 contacts [4Fe-4S] cluster. Residues Glu-145 and Ser-146 each coordinate (R)-5-phosphomevalonate. Residues Cys-297 and Cys-356 each coordinate [4Fe-4S] cluster. Lys-377 serves as a coordination point for (R)-5-phosphomevalonate.

The protein belongs to the AcnX type II large subunit family. Heterodimer composed of a large subunit (PMDh-L) and a small subunit (PMDh-S). Requires [4Fe-4S] cluster as cofactor.

It carries out the reaction (R)-5-phosphomevalonate = (2E)-3-methyl-5-phosphooxypent-2-enoate + H2O. Its pathway is isoprenoid biosynthesis; isopentenyl diphosphate biosynthesis via mevalonate pathway. With respect to regulation, neither the addition of 1 mM Mg(2+) nor 1 mM Mn(2+) has a significant effect on the activity, whereas Zn(2+) causes almost complete inactivation. Strongly inhibited by H(2)O(2), but not by EDTA or iodoacetamide. Component of a hydro-lyase that catalyzes the dehydration of mevalonate 5-phosphate (MVA5P) to form trans-anhydromevalonate 5-phosphate (tAHMP). Involved in the archaeal mevalonate (MVA) pathway, which provides fundamental precursors for isoprenoid biosynthesis, such as isopentenyl diphosphate (IPP) and dimethylallyl diphosphate (DMAPP). This is Phosphomevalonate dehydratase large subunit from Aeropyrum pernix (strain ATCC 700893 / DSM 11879 / JCM 9820 / NBRC 100138 / K1).